Consider the following 216-residue polypeptide: Probable RNA 2'-phosphotransferase 1 (216 aa).

Belongs to the KptA/TPT1 family.

Functionally, removes the 2'-phosphate from RNA via an intermediate in which the phosphate is ADP-ribosylated by NAD followed by a presumed transesterification to release the RNA and generate ADP-ribose 1''-2''-cyclic phosphate (APPR&gt;P). May function as an ADP-ribosylase. The polypeptide is Probable RNA 2'-phosphotransferase 1 (kptA1) (Archaeoglobus fulgidus (strain ATCC 49558 / DSM 4304 / JCM 9628 / NBRC 100126 / VC-16)).